The following is a 159-amino-acid chain: C-type lectin BJcuL (159 aa).

The first 24 residues, 1-24 (MGRFLFVASSACWFVFLSLSGAKG), serve as a signal peptide directing secretion. 4 disulfides stabilise this stretch: Cys27–Cys38, Cys55–Cys155, Cys62–Cys157, and Cys130–Cys147. One can recognise a C-type lectin domain in the interval 34–156 (MNGLCYKIFN…CESKNAFLCQ (123 aa)). 5 residues coordinate Ca(2+): Gln120, Asp122, Glu128, Asn143, and Asp144. The Galactose-binding motif lies at 120 to 122 (QPD).

This sequence belongs to the true venom lectin family. Homodecamer of disulfide-linked dimers arranged in two 5-fold symmetric pentamers. Binds the gentamicin group of aminoglycoside antibiotics at the dimeric interface near the intermolecular disulfide bond. As to expression, expressed by the venom gland.

It is found in the secreted. Hemagglutination activity is inhibited by lactose (MIC=2.5 mM), galactose (MIC=10 mM), and raffinose. Is very weakly or not inhibited by gentamicin, kanamycin, glucose and sucrose. Galactose-binding lectin which recognizes specific carbohydrate structures and agglutinates a variety of animal cells by binding to cell-surface glycoproteins and glycolipids. Calcium-dependent lectin. Also binds lactose and raffinose. Shows high hemagglutinating activity on mammalian erythrocytes. It also involved in immunological functions, since it is able of inducing potent neutrophil activation. In vivo, it causes edema and increases vascular permeability after injection into mouse hind paws (10-100 ug/paw). In anesthetized rats, it decreases the blood pressure by approximately 15%, with a rapid return to the resting level. Is an effective inhibitor of cell growth in some cancer cell lines, especially against renal and pancreatic cancer cell lines, human breast and ovarian carcinoma, glioblastoma and a bovine brain microvascular endothelial cell line. This is C-type lectin BJcuL from Bothrops jararacussu (Jararacussu).